We begin with the raw amino-acid sequence, 122 residues long: Small ribosomal subunit protein bS6 (122 aa).

Belongs to the bacterial ribosomal protein bS6 family.

Binds together with bS18 to 16S ribosomal RNA. The polypeptide is Small ribosomal subunit protein bS6 (Neisseria meningitidis serogroup C (strain 053442)).